We begin with the raw amino-acid sequence, 155 residues long: Small ribosomal subunit protein uS7c (155 aa).

The protein belongs to the universal ribosomal protein uS7 family. Part of the 30S ribosomal subunit.

It localises to the plastid. Its function is as follows. One of the primary rRNA binding proteins, it binds directly to 16S rRNA where it nucleates assembly of the head domain of the 30S subunit. The sequence is that of Small ribosomal subunit protein uS7c (rps7) from Lathraea clandestina (Purple toothwort).